Consider the following 199-residue polypeptide: Outer-membrane lipoprotein LolB (199 aa).

An N-terminal signal peptide occupies residues 1–28 (MSACPAPRSPFRWLHAFTLCLLLAVLAG). C29 is lipidated: N-palmitoyl cysteine. A lipid anchor (S-diacylglycerol cysteine) is attached at C29.

The protein belongs to the LolB family. In terms of assembly, monomer.

It is found in the cell outer membrane. Its function is as follows. Plays a critical role in the incorporation of lipoproteins in the outer membrane after they are released by the LolA protein. In Bordetella bronchiseptica (strain ATCC BAA-588 / NCTC 13252 / RB50) (Alcaligenes bronchisepticus), this protein is Outer-membrane lipoprotein LolB.